A 143-amino-acid chain; its full sequence is Insertion element IS2 uncharacterized 16.4 kDa protein (143 aa).

The protein is Insertion element IS2 uncharacterized 16.4 kDa protein of Escherichia coli.